A 210-amino-acid chain; its full sequence is Large ribosomal subunit protein bL25 (210 aa).

This sequence belongs to the bacterial ribosomal protein bL25 family. CTC subfamily. As to quaternary structure, part of the 50S ribosomal subunit; part of the 5S rRNA/L5/L18/L25 subcomplex. Contacts the 5S rRNA. Binds to the 5S rRNA independently of L5 and L18.

Its function is as follows. This is one of the proteins that binds to the 5S RNA in the ribosome where it forms part of the central protuberance. This chain is Large ribosomal subunit protein bL25, found in Herminiimonas arsenicoxydans.